We begin with the raw amino-acid sequence, 180 residues long: Large ribosomal subunit protein uL6 (180 aa).

This sequence belongs to the universal ribosomal protein uL6 family. Part of the 50S ribosomal subunit.

Its function is as follows. This protein binds to the 23S rRNA, and is important in its secondary structure. It is located near the subunit interface in the base of the L7/L12 stalk, and near the tRNA binding site of the peptidyltransferase center. This Clostridium kluyveri (strain NBRC 12016) protein is Large ribosomal subunit protein uL6.